The primary structure comprises 1295 residues: Phosphoribosylformylglycinamidine synthase (1295 aa).

Positions 302-327 (APFSGAATGSGGEIRDEGATGRGSKP) are disordered. ATP contacts are provided by residues 306–317 (GAATGSGGEIRD) and Ala677. Residues Asp678, Glu717, Asn721, and Asp884 each coordinate Mg(2+). Position 886 (Ser886) interacts with ATP. The Glutamine amidotransferase type-1 domain maps to 1042–1295 (MAILREQGVN…MFRNARVYLG (254 aa)). The Nucleophile role is filled by Cys1135. Catalysis depends on residues His1260 and Glu1262.

It in the N-terminal section; belongs to the FGAMS family. As to quaternary structure, monomer.

It localises to the cytoplasm. The enzyme catalyses N(2)-formyl-N(1)-(5-phospho-beta-D-ribosyl)glycinamide + L-glutamine + ATP + H2O = 2-formamido-N(1)-(5-O-phospho-beta-D-ribosyl)acetamidine + L-glutamate + ADP + phosphate + H(+). The protein operates within purine metabolism; IMP biosynthesis via de novo pathway; 5-amino-1-(5-phospho-D-ribosyl)imidazole from N(2)-formyl-N(1)-(5-phospho-D-ribosyl)glycinamide: step 1/2. Phosphoribosylformylglycinamidine synthase involved in the purines biosynthetic pathway. Catalyzes the ATP-dependent conversion of formylglycinamide ribonucleotide (FGAR) and glutamine to yield formylglycinamidine ribonucleotide (FGAM) and glutamate. The polypeptide is Phosphoribosylformylglycinamidine synthase (Pseudoalteromonas atlantica (strain T6c / ATCC BAA-1087)).